Here is a 181-residue protein sequence, read N- to C-terminus: Adenine phosphoribosyltransferase 1 (181 aa).

This sequence belongs to the purine/pyrimidine phosphoribosyltransferase family. As to quaternary structure, homodimer.

The protein localises to the cytoplasm. The catalysed reaction is AMP + diphosphate = 5-phospho-alpha-D-ribose 1-diphosphate + adenine. Its pathway is purine metabolism; AMP biosynthesis via salvage pathway; AMP from adenine: step 1/1. Its function is as follows. Catalyzes a salvage reaction resulting in the formation of AMP, that is energically less costly than de novo synthesis. The sequence is that of Adenine phosphoribosyltransferase 1 (APT1) from Triticum aestivum (Wheat).